We begin with the raw amino-acid sequence, 325 residues long: Acetyl-coenzyme A carboxylase carboxyl transferase subunit alpha (325 aa).

Residues 35–292 (EIEKLEARLT…DRVLRASLKQ (258 aa)) enclose the CoA carboxyltransferase C-terminal domain.

It belongs to the AccA family. Acetyl-CoA carboxylase is a heterohexamer composed of biotin carboxyl carrier protein (AccB), biotin carboxylase (AccC) and two subunits each of ACCase subunit alpha (AccA) and ACCase subunit beta (AccD).

The protein resides in the cytoplasm. It carries out the reaction N(6)-carboxybiotinyl-L-lysyl-[protein] + acetyl-CoA = N(6)-biotinyl-L-lysyl-[protein] + malonyl-CoA. It functions in the pathway lipid metabolism; malonyl-CoA biosynthesis; malonyl-CoA from acetyl-CoA: step 1/1. Its function is as follows. Component of the acetyl coenzyme A carboxylase (ACC) complex. First, biotin carboxylase catalyzes the carboxylation of biotin on its carrier protein (BCCP) and then the CO(2) group is transferred by the carboxyltransferase to acetyl-CoA to form malonyl-CoA. The protein is Acetyl-coenzyme A carboxylase carboxyl transferase subunit alpha of Geobacillus thermodenitrificans (strain NG80-2).